Reading from the N-terminus, the 553-residue chain is Arginine--tRNA ligase (553 aa).

Residues 130–140 (ANPTGDLHIGH) carry the 'HIGH' region motif.

Belongs to the class-I aminoacyl-tRNA synthetase family. In terms of assembly, monomer.

It is found in the cytoplasm. It carries out the reaction tRNA(Arg) + L-arginine + ATP = L-arginyl-tRNA(Arg) + AMP + diphosphate. The chain is Arginine--tRNA ligase from Staphylococcus aureus (strain MSSA476).